The primary structure comprises 351 residues: Anthranilate phosphoribosyltransferase (351 aa).

5-phospho-alpha-D-ribose 1-diphosphate is bound by residues Gly-85, Gly-88–Asp-89, Ser-93, Asn-95–Thr-98, Lys-113–Ser-121, and Thr-125. Anthranilate is bound at residue Gly-85. Position 97 (Ser-97) interacts with Mg(2+). Asn-116 is a binding site for anthranilate. Arg-171 lines the anthranilate pocket. Positions 229 and 230 each coordinate Mg(2+).

It belongs to the anthranilate phosphoribosyltransferase family. As to quaternary structure, homodimer. It depends on Mg(2+) as a cofactor.

The enzyme catalyses N-(5-phospho-beta-D-ribosyl)anthranilate + diphosphate = 5-phospho-alpha-D-ribose 1-diphosphate + anthranilate. The protein operates within amino-acid biosynthesis; L-tryptophan biosynthesis; L-tryptophan from chorismate: step 2/5. In terms of biological role, catalyzes the transfer of the phosphoribosyl group of 5-phosphorylribose-1-pyrophosphate (PRPP) to anthranilate to yield N-(5'-phosphoribosyl)-anthranilate (PRA). This is Anthranilate phosphoribosyltransferase from Saccharopolyspora erythraea (strain ATCC 11635 / DSM 40517 / JCM 4748 / NBRC 13426 / NCIMB 8594 / NRRL 2338).